Reading from the N-terminus, the 90-residue chain is SAGA-associated factor 11 (90 aa).

Residues 63 to 84 (FSCDNCGRKIAGGRFAQHINKC) form an SGF11-type zinc finger.

This sequence belongs to the SGF11 family. In terms of assembly, component of the 1.8 MDa SAGA transcription coactivator-HAT complex. SAGA is built of 5 distinct domains with specialized functions. Within the SAGA complex, SUS1, SGF11, SGF73 and UBP8 form an additional subcomplex of SAGA called the DUB module (deubiquitination module). Interacts directly with SGF73, SUS1 and UBP8.

The protein resides in the nucleus. In terms of biological role, functions as a component of the transcription regulatory histone acetylation (HAT) complex SAGA. At the promoters, SAGA is required for recruitment of the basal transcription machinery. It influences RNA polymerase II transcriptional activity through different activities such as TBP interaction and promoter selectivity, interaction with transcription activators, and chromatin modification through histone acetylation and deubiquitination. SAGA acetylates nucleosomal histone H3 to some extent (to form H3K9ac, H3K14ac, H3K18ac and H3K23ac). SAGA interacts with DNA via upstream activating sequences (UASs). Involved in transcriptional regulation of a subset of SAGA-regulated genes. Within the SAGA complex, participates in a subcomplex, that specifically deubiquitinates histones H2B. This chain is SAGA-associated factor 11, found in Lodderomyces elongisporus (strain ATCC 11503 / CBS 2605 / JCM 1781 / NBRC 1676 / NRRL YB-4239) (Yeast).